Consider the following 158-residue polypeptide: Cyclic pyranopterin monophosphate synthase (158 aa).

Residues 74–76 and 112–113 contribute to the substrate site; these read MCH and ME. Asp-127 is an active-site residue.

It belongs to the MoaC family. In terms of assembly, homohexamer; trimer of dimers.

It catalyses the reaction (8S)-3',8-cyclo-7,8-dihydroguanosine 5'-triphosphate = cyclic pyranopterin phosphate + diphosphate. It participates in cofactor biosynthesis; molybdopterin biosynthesis. In terms of biological role, catalyzes the conversion of (8S)-3',8-cyclo-7,8-dihydroguanosine 5'-triphosphate to cyclic pyranopterin monophosphate (cPMP). The protein is Cyclic pyranopterin monophosphate synthase of Helicobacter pylori (strain J99 / ATCC 700824) (Campylobacter pylori J99).